Reading from the N-terminus, the 467-residue chain is ATP synthase subunit beta (467 aa).

150–157 (GGAGVGKT) lines the ATP pocket.

It belongs to the ATPase alpha/beta chains family. F-type ATPases have 2 components, CF(1) - the catalytic core - and CF(0) - the membrane proton channel. CF(1) has five subunits: alpha(3), beta(3), gamma(1), delta(1), epsilon(1). CF(0) has three main subunits: a(1), b(2) and c(9-12). The alpha and beta chains form an alternating ring which encloses part of the gamma chain. CF(1) is attached to CF(0) by a central stalk formed by the gamma and epsilon chains, while a peripheral stalk is formed by the delta and b chains.

It localises to the cell inner membrane. The catalysed reaction is ATP + H2O + 4 H(+)(in) = ADP + phosphate + 5 H(+)(out). In terms of biological role, produces ATP from ADP in the presence of a proton gradient across the membrane. The catalytic sites are hosted primarily by the beta subunits. This is ATP synthase subunit beta from Aliivibrio fischeri (strain ATCC 700601 / ES114) (Vibrio fischeri).